Reading from the N-terminus, the 760-residue chain is ATP-dependent zinc metalloprotease FtsH (760 aa).

The Cytoplasmic segment spans residues 1-5; it reads MNRKN. Residues 6-26 form a helical membrane-spanning segment; that stretch reads VTRTITAIAVVVLLGWSFFYF. The Extracellular segment spans residues 27–110; the sequence is SDDTRGYKPV…KVSTVVNQGS (84 aa). The chain crosses the membrane as a helical span at residues 111 to 131; sequence ILGELLVYVLPLLLLVGLFVM. The Cytoplasmic portion of the chain corresponds to 132 to 760; sequence FSRMQGGARM…EVSRTKPAHG (629 aa). 203–210 is a binding site for ATP; the sequence is GPPGTGKT. Histidine 425 is a Zn(2+) binding site. The active site involves glutamate 426. 2 residues coordinate Zn(2+): histidine 429 and aspartate 501. A disordered region spans residues 616 to 760; the sequence is DFGGRIPSDK…EVSRTKPAHG (145 aa). Residues 650 to 669 show a composition bias toward low complexity; that stretch reads AFKAAIAQATQAAEAARSDA. The span at 740–750 shows a compositional bias: acidic residues; it reads GSDESSAEQDD.

The protein in the central section; belongs to the AAA ATPase family. It in the C-terminal section; belongs to the peptidase M41 family. As to quaternary structure, homohexamer. It depends on Zn(2+) as a cofactor.

The protein localises to the cell membrane. Functionally, acts as a processive, ATP-dependent zinc metallopeptidase for both cytoplasmic and membrane proteins. Plays a role in the quality control of integral membrane proteins. In Mycobacterium bovis (strain ATCC BAA-935 / AF2122/97), this protein is ATP-dependent zinc metalloprotease FtsH.